A 79-amino-acid chain; its full sequence is UPF0150 protein ssr1765 (79 aa).

Belongs to the UPF0150 family.

This Synechocystis sp. (strain ATCC 27184 / PCC 6803 / Kazusa) protein is UPF0150 protein ssr1765.